The primary structure comprises 123 residues: uncharacterized protein (123 aa).

A compositionally biased stretch (polar residues) spans 1–12 (MALNNVSLSSGD). 2 disordered regions span residues 1–25 (MALNNVSLSSGDQRSRVAYRSSHGD) and 53–91 (PRQAVRPSVRAESRRVDGGGRSPREPDGRGRSRQARFSP). Over residues 61-82 (VRAESRRVDGGGRSPREPDGRG) the composition is skewed to basic and acidic residues.

This is an uncharacterized protein from Homo sapiens (Human).